A 648-amino-acid chain; its full sequence is Macrolide export ATP-binding/permease protein MacB (648 aa).

The region spanning 5–243 (LELKDIRRSY…AGGTEPVVNT (239 aa)) is the ABC transporter domain. 41–48 (GASGSGKS) is an ATP binding site. A run of 4 helical transmembrane segments spans residues 273–293 (LLTM…VVVG), 523–543 (LFMT…VMNI), 576–596 (AVLV…LIAF), and 611–631 (PLAL…FGWL).

It belongs to the ABC transporter superfamily. Macrolide exporter (TC 3.A.1.122) family. As to quaternary structure, homodimer. Part of the tripartite efflux system MacAB-TolC, which is composed of an inner membrane transporter, MacB, a periplasmic membrane fusion protein, MacA, and an outer membrane component, TolC. The complex forms a large protein conduit and can translocate molecules across both the inner and outer membranes. Interacts with MacA.

The protein localises to the cell inner membrane. Part of the tripartite efflux system MacAB-TolC. MacB is a non-canonical ABC transporter that contains transmembrane domains (TMD), which form a pore in the inner membrane, and an ATP-binding domain (NBD), which is responsible for energy generation. Confers resistance against macrolides. This Escherichia coli O157:H7 protein is Macrolide export ATP-binding/permease protein MacB.